Consider the following 336-residue polypeptide: Putative transcription factor avaE (336 aa).

The segment at residues 32–100 (TATRLNQTTF…VPLDQNESMP (69 aa)) is a DNA-binding region (WRKY).

Its subcellular location is the nucleus. It functions in the pathway secondary metabolite biosynthesis. Functionally, putative transcription factor; part of the cluster that mediates the biosynthesis of a highly modified cyclo-arginine-tryptophan dipeptide (cRW). This Aspergillus versicolor protein is Putative transcription factor avaE.